The sequence spans 139 residues: Galactoside-binding soluble lectin 13 (139 aa).

A Galectin domain is found at 6–138 (VPYKLPVSLS…DISLTSVCVC (133 aa)).

As to quaternary structure, homodimer; disulfide-linked. In terms of tissue distribution, detected in adult and fetal spleen, fetal kidney, adult urinary bladder and placenta. Placental expression originates predominantly from the syncytiotrophoblast.

The protein localises to the cytoplasm. It is found in the nucleus matrix. Binds beta-galactoside and lactose. Strong inducer of T-cell apoptosis. Has hemagglutinating activity towards chicken erythrocytes. In Homo sapiens (Human), this protein is Galactoside-binding soluble lectin 13 (LGALS13).